The primary structure comprises 131 residues: Large ribosomal subunit protein bL17 (131 aa).

This sequence belongs to the bacterial ribosomal protein bL17 family. As to quaternary structure, part of the 50S ribosomal subunit. Contacts protein L32.

In Shewanella oneidensis (strain ATCC 700550 / JCM 31522 / CIP 106686 / LMG 19005 / NCIMB 14063 / MR-1), this protein is Large ribosomal subunit protein bL17.